Consider the following 216-residue polypeptide: Large ribosomal subunit protein uL1z (216 aa).

It belongs to the universal ribosomal protein uL1 family. As to quaternary structure, interacts with the GTPase NUG2.

The polypeptide is Large ribosomal subunit protein uL1z (RPL10AA) (Arabidopsis thaliana (Mouse-ear cress)).